A 203-amino-acid chain; its full sequence is ATP phosphoribosyltransferase (203 aa).

The protein belongs to the ATP phosphoribosyltransferase family. Short subfamily. In terms of assembly, heteromultimer composed of HisG and HisZ subunits.

The protein localises to the cytoplasm. It catalyses the reaction 1-(5-phospho-beta-D-ribosyl)-ATP + diphosphate = 5-phospho-alpha-D-ribose 1-diphosphate + ATP. Its pathway is amino-acid biosynthesis; L-histidine biosynthesis; L-histidine from 5-phospho-alpha-D-ribose 1-diphosphate: step 1/9. Functionally, catalyzes the condensation of ATP and 5-phosphoribose 1-diphosphate to form N'-(5'-phosphoribosyl)-ATP (PR-ATP). Has a crucial role in the pathway because the rate of histidine biosynthesis seems to be controlled primarily by regulation of HisG enzymatic activity. This is ATP phosphoribosyltransferase from Campylobacter fetus subsp. fetus (strain 82-40).